Reading from the N-terminus, the 208-residue chain is Harpin secretion protein HrpW (208 aa).

4 helical membrane-spanning segments follow: residues 2 to 22 (LALF…CTAF), 46 to 66 (ALYG…AHDI), 149 to 169 (IGFL…NLLL), and 176 to 196 (VSPM…VSGW).

Belongs to the FliP/MopC/SpaP family.

The protein localises to the cell membrane. Functionally, required for the secretion of harpin. The sequence is that of Harpin secretion protein HrpW (hrpW) from Pseudomonas syringae pv. syringae.